Reading from the N-terminus, the 408-residue chain is CinA-like protein (408 aa).

Belongs to the CinA family.

The sequence is that of CinA-like protein from Anaeromyxobacter dehalogenans (strain 2CP-C).